The primary structure comprises 132 residues: Large-conductance mechanosensitive channel (132 aa).

2 helical membrane passes run 11–31 and 75–95; these read FISR…GAFG and GSFL…FLLV.

Belongs to the MscL family. Homopentamer.

It is found in the cell inner membrane. In terms of biological role, channel that opens in response to stretch forces in the membrane lipid bilayer. May participate in the regulation of osmotic pressure changes within the cell. The polypeptide is Large-conductance mechanosensitive channel (Synechococcus sp. (strain JA-2-3B'a(2-13)) (Cyanobacteria bacterium Yellowstone B-Prime)).